The following is a 324-amino-acid chain: Reaction center protein M chain (324 aa).

Topologically, residues 2–51 (ADYQTIYTQIQARGPHITVSGEWGDNDRVGKPFYSYWLGKIGDAQIGPIY) are cytoplasmic. The helical transmembrane segment at 52–76 (LGASGIAAFAFGSTAILIILFNMAA) threads the bilayer. At 77-110 (EVHFDPLQFFRQFFWLGLYPPKAQYGMGIPPLHD) the chain is on the periplasmic side. The chain crosses the membrane as a helical span at residues 111–137 (GGWWLMAGLFMTLSLGSWWIRVYSRAR). Over 138-142 (ALGLG) the chain is Cytoplasmic. Residues 143-166 (THIAWNFAAAIFFVLCIGCIHPTL) form a helical membrane-spanning segment. Over 167–197 (VGSWSEGVPFGIWPHIDWLTAFSIRYGNFYY) the chain is Periplasmic. Positions 181 and 201 each coordinate (7R,8Z)-bacteriochlorophyll b. Residues 198 to 223 (CPWHGFSIGFAYGCGLLFAAHGATIL) form a helical membrane-spanning segment. The Fe cation site is built by His218 and Glu233. At 224-259 (AVARFGGDREIEQITDRGTAVERAALFWRWTIGFNA) the chain is on the cytoplasmic side. Trp251 is a binding site for a ubiquinone. A helical membrane pass occupies residues 260-284 (TIESVHRWGWFFSLMVMVSASVGIL). Residue His265 coordinates Fe cation. Residues 285–324 (LTGTFVDNWYLWCVKHGAAPDYPAYLPATPDPASLPGAPK) are Periplasmic-facing.

This sequence belongs to the reaction center PufL/M/PsbA/D family. In terms of assembly, reaction center is composed of four bacteriochlorophylls, two bacteriopheophytins, two ubiquinones, one iron, and three highly hydrophobic polypeptide chains (designated L, M, and H).

The protein localises to the cellular chromatophore membrane. Functionally, the reaction center is a membrane-bound complex that mediates the initial photochemical event in the electron transfer process of photosynthesis. The protein is Reaction center protein M chain (pufM) of Blastochloris viridis (Rhodopseudomonas viridis).